Consider the following 738-residue polypeptide: MEHTYQYAWVIPLLPLPVIMLMGFGLFLIPTATKNLRRIWAFPSILLLSIAMVFSLHLSIQQINGSSIYQYLWSWTINNDFSLEFGYLVDPLTSIMLILITTVGILVLIYSDDYMSHDEGYLRFFVYISFFNTSMLGLVTSSNLIQIYFFWELVGMCSYLLIGFWFTRPIAASACQKAFVTNRVGDFGLLLGILGFFWITGSLEFRDLFKIANNWIPNNGINSLLTTLCAFLLFLGAVAKSAQFPLHVWLPDAMEGPTPISALIHAATMVAAGIFLLARLLPLFISLPLLMSFISLVGTITLFLGATLALAQRDIKRSLAYSTMSQLGYMMLALGIGSYQAALFHLITHAYSKALLFLGSGSVIHSMEPLVGYSPDKSQNMVLMGGLRKYVPITRTTFLCGTLSLCGIPPLACFWSKDEILSNSWLYSPFFGIIASFTAGLTAFYMFRIYLLTFDGYLRVHFQNYSSTKEGSLYSISLWGKSISKGVNRDFVLSTMKSGVSFFSQNIPKIPANTRNKIGSFSTPFGAKKTFVYPHETGNTMLFPLLILLLFTLFIGSIGIPFDNGVKDNRILELTILSKWLTPSINLFQENSNSSINSYEFLTNAISSVSLAIFGLFIAYIFYGSAYSFFQNLNFQNSLVKKNPKKSFLDEVKKKIYSWSYNRGYIDFFYTRVFILGIRRLAELTHFFDKGVIDGIINGVGLAGFCIGEEIKYVGGGRISSYLFFFLCYVSLFLFFIP.

17 helical membrane-spanning segments follow: residues 9–29 (WVIP…LFLI), 39–59 (IWAF…LHLS), 89–109 (VDPL…LVLI), 125–145 (FVYI…SNLI), 147–167 (IYFF…FWFT), 185–205 (GDFG…SLEF), 219–239 (NGIN…GAVA), 258–278 (TPIS…FLLA), 280–300 (LLPL…VGTI), 327–347 (LGYM…FHLI), 354–374 (ALLF…VGYS), 396–416 (TTFL…CFWS), 425–445 (WLYS…TAFY), 542–562 (LFPL…GIPF), 610–630 (SLAI…YSFF), 691–711 (GVID…GEEI), and 717–737 (GRIS…LFFI).

The protein belongs to the complex I subunit 5 family. In terms of assembly, NDH is composed of at least 16 different subunits, 5 of which are encoded in the nucleus.

It is found in the plastid. The protein localises to the chloroplast thylakoid membrane. The catalysed reaction is a plastoquinone + NADH + (n+1) H(+)(in) = a plastoquinol + NAD(+) + n H(+)(out). The enzyme catalyses a plastoquinone + NADPH + (n+1) H(+)(in) = a plastoquinol + NADP(+) + n H(+)(out). Its function is as follows. NDH shuttles electrons from NAD(P)H:plastoquinone, via FMN and iron-sulfur (Fe-S) centers, to quinones in the photosynthetic chain and possibly in a chloroplast respiratory chain. The immediate electron acceptor for the enzyme in this species is believed to be plastoquinone. Couples the redox reaction to proton translocation, and thus conserves the redox energy in a proton gradient. This Saccharum hybrid (Sugarcane) protein is NAD(P)H-quinone oxidoreductase subunit 5, chloroplastic (ndhF).